The sequence spans 172 residues: Large ribosomal subunit protein uL10 (172 aa).

It belongs to the universal ribosomal protein uL10 family. As to quaternary structure, part of the ribosomal stalk of the 50S ribosomal subunit. The N-terminus interacts with L11 and the large rRNA to form the base of the stalk. The C-terminus forms an elongated spine to which L12 dimers bind in a sequential fashion forming a multimeric L10(L12)X complex.

Functionally, forms part of the ribosomal stalk, playing a central role in the interaction of the ribosome with GTP-bound translation factors. This Mesorhizobium japonicum (strain LMG 29417 / CECT 9101 / MAFF 303099) (Mesorhizobium loti (strain MAFF 303099)) protein is Large ribosomal subunit protein uL10.